The primary structure comprises 74 residues: MKPNSHPEYVTTEVACSCGNTFTTRSTAKGGSIHVETCSACHPFYTGKQRVLDTAGRVAKFQQKYAKVQAKKGK.

Positions 16, 18, 38, and 41 each coordinate Zn(2+).

The protein belongs to the bacterial ribosomal protein bL31 family. Type A subfamily. As to quaternary structure, part of the 50S ribosomal subunit. It depends on Zn(2+) as a cofactor.

Binds the 23S rRNA. In Salinispora tropica (strain ATCC BAA-916 / DSM 44818 / JCM 13857 / NBRC 105044 / CNB-440), this protein is Large ribosomal subunit protein bL31.